A 156-amino-acid polypeptide reads, in one-letter code: Lipoprotein signal peptidase (156 aa).

The next 3 membrane-spanning stretches (helical) occupy residues 37–57 (VIPGFFNLVHVVNKGAAFGFL), 68–88 (FFVVVTIIALGAIGMLLKSAE), and 95–115 (ILGLGFVLGGAIGNLIDRILY). Residues D120 and D138 contribute to the active site. Residues 133–153 (AFNVADIAICLGAFAMIVSFY) traverse the membrane as a helical segment.

Belongs to the peptidase A8 family.

It localises to the cell inner membrane. The enzyme catalyses Release of signal peptides from bacterial membrane prolipoproteins. Hydrolyzes -Xaa-Yaa-Zaa-|-(S,diacylglyceryl)Cys-, in which Xaa is hydrophobic (preferably Leu), and Yaa (Ala or Ser) and Zaa (Gly or Ala) have small, neutral side chains.. Its pathway is protein modification; lipoprotein biosynthesis (signal peptide cleavage). In terms of biological role, this protein specifically catalyzes the removal of signal peptides from prolipoproteins. This chain is Lipoprotein signal peptidase, found in Maridesulfovibrio salexigens (strain ATCC 14822 / DSM 2638 / NCIMB 8403 / VKM B-1763) (Desulfovibrio salexigens).